A 293-amino-acid polypeptide reads, in one-letter code: Cell wall protein PGA31 (293 aa).

Residues 1-18 (MKFLTAASLLTLSSSALA) form the signal peptide. Asn131 carries N-linked (GlcNAc...) asparagine glycosylation. Residues 161 to 187 (ESASSSSSSAAPEPTASSSEAPKETPV) are disordered. A compositionally biased stretch (low complexity) spans 163 to 180 (ASSSSSSAAPEPTASSSE). N-linked (GlcNAc...) asparagine glycosylation is present at Asn190. Positions 233–262 (VPSKTASSEAAPPKTTVDSVSKPAPSGKKP) are disordered. Gly271 carries the GPI-anchor amidated glycine lipid modification. The propeptide at 272 to 293 (AANALTGGSVAIAVAAAIGLVF) is removed in mature form.

Belongs to the SRP1/TIP1 family. The GPI-anchor is attached to the protein in the endoplasmic reticulum and serves to target the protein to the cell surface. There, the glucosamine-inositol phospholipid moiety is cleaved off and the GPI-modified mannoprotein is covalently attached via its lipidless GPI glycan remnant to the 1,6-beta-glucan of the outer cell wall layer.

It localises to the secreted. Its subcellular location is the cell wall. It is found in the membrane. Its function is as follows. Component of the cell wall involved in virulence which plays a role in the relationship between C.albicans and the host. Involved in the regulation or assembly of chitin within the cell wall. This chain is Cell wall protein PGA31 (PGA31), found in Candida albicans (strain SC5314 / ATCC MYA-2876) (Yeast).